The chain runs to 310 residues: MNNNLLIIAGPTAVGKSDLSVDLAKKLNGEIISVDSMQIYKYMDIGSAKISKEEMGGIPHYLIDFVDPSKEFSVAEFKDLTTEKIKDIQSRGKLPILVGGTGLYINSIICNMNFAESDKDEEYREELEKIANEHGNEYLHEMLKDIDLESYNSIHFNNRKRVIRALETYKLTGKPFSSFKAKNSIYETPYNIYYYVLNMDRAKLYDRINKRVDIMFEKGLLEEVKNLKAMGLTDDMQSMKGIGYKEVLYYLDGKISLEQCIEMIKQGSRNYAKRQLTWFRKDPRAIFIDKDTFASEEDISSKIINDIINS.

10–17 serves as a coordination point for ATP; the sequence is GPTAVGKS. 12-17 lines the substrate pocket; sequence TAVGKS. Residues 35–38 are interaction with substrate tRNA; that stretch reads DSMQ.

The protein belongs to the IPP transferase family. As to quaternary structure, monomer. Mg(2+) is required as a cofactor.

It carries out the reaction adenosine(37) in tRNA + dimethylallyl diphosphate = N(6)-dimethylallyladenosine(37) in tRNA + diphosphate. Its function is as follows. Catalyzes the transfer of a dimethylallyl group onto the adenine at position 37 in tRNAs that read codons beginning with uridine, leading to the formation of N6-(dimethylallyl)adenosine (i(6)A). This Clostridium perfringens (strain 13 / Type A) protein is tRNA dimethylallyltransferase.